The chain runs to 439 residues: Cobyrinate a,c-diamide synthase (439 aa).

One can recognise a GATase cobBQ-type domain in the interval 238 to 431; it reads KIAVAYDKAF…AHVNFLGNIE (194 aa). Cys-320 functions as the Nucleophile in the catalytic mechanism.

The protein belongs to the CobB/CbiA family. Requires Mg(2+) as cofactor.

It carries out the reaction cob(II)yrinate + 2 L-glutamine + 2 ATP + 2 H2O = cob(II)yrinate a,c diamide + 2 L-glutamate + 2 ADP + 2 phosphate + 2 H(+). It functions in the pathway cofactor biosynthesis; adenosylcobalamin biosynthesis; cob(II)yrinate a,c-diamide from sirohydrochlorin (anaerobic route): step 10/10. Its function is as follows. Catalyzes the ATP-dependent amidation of the two carboxylate groups at positions a and c of cobyrinate, using either L-glutamine or ammonia as the nitrogen source. In Clostridium tetani (strain Massachusetts / E88), this protein is Cobyrinate a,c-diamide synthase.